A 289-amino-acid polypeptide reads, in one-letter code: Somatostatin-like receptor F_48D10.1 (289 aa).

The Extracellular portion of the chain corresponds to methionine 1 to alanine 57. The N-linked (GlcNAc...) asparagine glycan is linked to asparagine 40. A helical membrane pass occupies residues valine 58–leucine 79. Residues arginine 80 to asparagine 89 lie on the Cytoplasmic side of the membrane. The chain crosses the membrane as a helical span at residues isoleucine 90 to alanine 110. Residues threonine 111–arginine 126 are Extracellular-facing. Cysteines 125 and 221 form a disulfide. Residues valine 127 to isoleucine 148 traverse the membrane as a helical segment. Over aspartate 149–lysine 170 the chain is Cytoplasmic. A helical membrane pass occupies residues valine 171–serine 191. Over aspartate 192 to threonine 240 the chain is Extracellular. A helical transmembrane segment spans residues alanine 241 to isoleucine 261. The Cytoplasmic portion of the chain corresponds to lysine 262–arginine 289.

This sequence belongs to the G-protein coupled receptor 1 family.

It localises to the cell membrane. This chain is Somatostatin-like receptor F_48D10.1, found in Takifugu rubripes (Japanese pufferfish).